Consider the following 33-residue polypeptide: Photosystem II reaction center protein T (33 aa).

Residues 3–23 (ALVYTFLLVSTLGILFFSIFF) form a helical membrane-spanning segment.

Belongs to the PsbT family. PSII is composed of 1 copy each of membrane proteins PsbA, PsbB, PsbC, PsbD, PsbE, PsbF, PsbH, PsbI, PsbJ, PsbK, PsbL, PsbM, PsbT, PsbY, PsbZ, Psb30/Ycf12, at least 3 peripheral proteins of the oxygen-evolving complex and a large number of cofactors. It forms dimeric complexes.

It localises to the plastid. It is found in the chloroplast thylakoid membrane. Found at the monomer-monomer interface of the photosystem II (PS II) dimer, plays a role in assembly and dimerization of PSII. PSII is a light-driven water plastoquinone oxidoreductase, using light energy to abstract electrons from H(2)O, generating a proton gradient subsequently used for ATP formation. The polypeptide is Photosystem II reaction center protein T (Pelargonium hortorum (Common geranium)).